The following is a 158-amino-acid chain: Pycsar effector protein SaPycTM (158 aa).

The next 3 membrane-spanning stretches (helical) occupy residues 20-40 (FADA…NFNF), 53-73 (IFNF…AFAV), and 136-156 (VFII…FQII).

Its subcellular location is the cell membrane. Pycsar (pyrimidine cyclase system for antiphage resistance) provides immunity against bacteriophage. The pyrimidine cyclase (PycC) synthesizes cyclic nucleotides in response to infection; these serve as specific second messenger signals. The signals activate the adjacent effector, leading to bacterial cell death and abortive phage infection. A clade E Pycsar system. Functionally, the effector gene of a two-gene Pycsar system. Expression of this and adjacent SaPycC cytidylate cyclase (AC P0DV38) probably confers resistance to bacteriophage. The genes are probably only expressed in response to bacteriophage infection. Probably only responds to cCMP (produced by its cognate NTP cyclase), acts by impairing membrane integrity. This is Pycsar effector protein SaPycTM from Staphylococcus aureus.